Here is a 135-residue protein sequence, read N- to C-terminus: Ribosome-binding factor A (135 aa).

The protein belongs to the RbfA family. Monomer. Binds 30S ribosomal subunits, but not 50S ribosomal subunits or 70S ribosomes.

The protein localises to the cytoplasm. In terms of biological role, one of several proteins that assist in the late maturation steps of the functional core of the 30S ribosomal subunit. Associates with free 30S ribosomal subunits (but not with 30S subunits that are part of 70S ribosomes or polysomes). Required for efficient processing of 16S rRNA. May interact with the 5'-terminal helix region of 16S rRNA. This Hyphomonas neptunium (strain ATCC 15444) protein is Ribosome-binding factor A.